The chain runs to 245 residues: 8-amino-3,8-dideoxy-manno-octulosonate cytidylyltransferase (245 aa).

Belongs to the KdsB family.

The protein resides in the cytoplasm. It catalyses the reaction 8-amino-3,8-dideoxy-alpha-D-manno-octulosonate + CTP = CMP-8-amino-3,8-dideoxy-alpha-D-manno-oct-2-ulosonate + diphosphate. It participates in bacterial outer membrane biogenesis; lipopolysaccharide biosynthesis. Functionally, activates KDO8N (a required 8-carbon sugar) for incorporation into bacterial lipopolysaccharide in the Shewanella genus. The chain is 8-amino-3,8-dideoxy-manno-octulosonate cytidylyltransferase from Shewanella pealeana (strain ATCC 700345 / ANG-SQ1).